An 837-amino-acid chain; its full sequence is MSLSHLYRDGEGHLDDDDDERENFEITDWDLQNEFNPNRQRHWQTKEEATYGVWAERDSDEERPSFGGKRARDYSAPVNFISAGLKKGAAEEADSEDSDAEEKPVKQEDFPKDLGPKKLKTGGNFKPSQKGFAGGTKSFMDFGSWERHTKGIGQKLLQKMGYVPGRGLGKNAQGIINPIEAKQRKGKGAVGAYGSERTTQSLQDFPVADSEEEAEEEFQKELSQWRKDPSGSKKKPKYSYKTVEELKAKGRVSKKLTAPQKELSQVKVIDMTGREQKVYYSYSQISHKHSVPDEGVPLLAQLPPTAGKEAKVPGFALPELEHNLQLLIERTEQEIIQSDRQLQYERDMVVSLSHELEKTAEVLAHEERVISNLSKVLALVEECEHRMQPHGADPLTLDECARIFETLQDKYYEEYRLADRADLAVAIVYPLVKDYFKDWHPLEDSNYGTQIISKWKSLLENDQLLSHSSQDLSSDAFHRLMWEVWMPFVRNVVAQWQPRNCEPMVDFLDSWAHIIPVWILDNILDQLIFPKLQKEVDNWNPLTDTVPIHSWIHPWLPLMQARLEPLYSPVRSKLSSALQKWHPSDASAKLILQPWKEVLTPGSWEAFMLRNIVPKLGMCLGELVINPHQQHMDAFYWVMDWEGMISVSSLVGLLEKHFFPKWLQVLCSWLSNSPNYEEITKWYLGWKSMFSDQVLAHPSVKDKFNEALDIMNRAVSSNVGAYMQPGARENIAYLTHTERRKDFQYEAMQERREAENMAQRGIGVAASSVPMNFKDLIETKAEEHNIVFMPVIGKRHEGKQLYTFGRIVIYIDRGVVFVQGEKTWVPTSLQSLIDMAK.

Composition is skewed to basic and acidic residues over residues 1-13 and 44-64; these read MSLS…GEGH and QTKE…EERP. Disordered stretches follow at residues 1-21, 34-73, and 85-135; these read MSLS…DDER, EFNP…RARD, and LKKG…FAGG. The interval 1 to 50 is required for interaction with DHX15; that stretch reads MSLSHLYRDGEGHLDDDDDERENFEITDWDLQNEFNPNRQRHWQTKEEAT. Phosphoserine is present on residues Ser-2, Ser-59, Ser-95, and Ser-98. Over residues 91-100 the composition is skewed to acidic residues; it reads EEADSEDSDA. Positions 101-116 are enriched in basic and acidic residues; sequence EEKPVKQEDFPKDLGP. Position 144 is a phosphoserine (Ser-144). One can recognise a G-patch domain in the interval 149-195; that stretch reads TKGIGQKLLQKMGYVPGRGLGKNAQGIINPIEAKQRKGKGAVGAYGS. Positions 183–236 are disordered; it reads QRKGKGAVGAYGSERTTQSLQDFPVADSEEEAEEEFQKELSQWRKDPSGSKKKP. Ser-210 bears the Phosphoserine mark. The span at 217 to 231 shows a compositional bias: basic and acidic residues; that stretch reads EFQKELSQWRKDPSG. The Nuclear localization signal motif lies at 700–705; it reads VKDKFN. Positions 710–734 are required for nuclear speckle localization; sequence IMNRAVSSNVGAYMQPGARENIAYL.

It belongs to the TFP11/STIP family. Identified in the spliceosome C complex. Found in the Intron Large (IL) complex, a post-mRNA release spliceosomal complex containing the excised intron, U2, U5 and U6 snRNPs, and splicing factors. Interacts with TUFT1. Interacts with DHX15; indicative for a recruitment of DHX15 to the IL complex. Interacts with GCFC2.

The protein localises to the cytoplasm. The protein resides in the nucleus. Functionally, involved in pre-mRNA splicing, specifically in spliceosome disassembly during late-stage splicing events. Intron turnover seems to proceed through reactions in two lariat-intron associated complexes termed Intron Large (IL) and Intron Small (IS). In cooperation with DHX15 seems to mediate the transition of the U2, U5 and U6 snRNP-containing IL complex to the snRNP-free IS complex leading to efficient debranching and turnover of excised introns. May play a role in the differentiation of ameloblasts and odontoblasts or in the forming of the enamel extracellular matrix. The sequence is that of Tuftelin-interacting protein 11 (Tfip11) from Rattus norvegicus (Rat).